A 130-amino-acid chain; its full sequence is Small ribosomal subunit protein uS11 (130 aa).

This sequence belongs to the universal ribosomal protein uS11 family. In terms of assembly, part of the 30S ribosomal subunit.

Functionally, located on the platform of the 30S subunit. The chain is Small ribosomal subunit protein uS11 from Nanoarchaeum equitans (strain Kin4-M).